We begin with the raw amino-acid sequence, 336 residues long: 4-hydroxy-3-methylbut-2-enyl diphosphate reductase (336 aa).

Cysteine 32 contacts [4Fe-4S] cluster. Residues histidine 61 and histidine 94 each coordinate (2E)-4-hydroxy-3-methylbut-2-enyl diphosphate. Residues histidine 61 and histidine 94 each contribute to the dimethylallyl diphosphate site. Isopentenyl diphosphate is bound by residues histidine 61 and histidine 94. Cysteine 116 provides a ligand contact to [4Fe-4S] cluster. Histidine 148 provides a ligand contact to (2E)-4-hydroxy-3-methylbut-2-enyl diphosphate. Dimethylallyl diphosphate is bound at residue histidine 148. Histidine 148 contributes to the isopentenyl diphosphate binding site. Residue glutamate 150 is the Proton donor of the active site. Residue threonine 189 coordinates (2E)-4-hydroxy-3-methylbut-2-enyl diphosphate. Cysteine 219 provides a ligand contact to [4Fe-4S] cluster. Residues serine 247, serine 248, asparagine 249, and serine 292 each coordinate (2E)-4-hydroxy-3-methylbut-2-enyl diphosphate. 4 residues coordinate dimethylallyl diphosphate: serine 247, serine 248, asparagine 249, and serine 292. Serine 247, serine 248, asparagine 249, and serine 292 together coordinate isopentenyl diphosphate.

It belongs to the IspH family. [4Fe-4S] cluster is required as a cofactor.

The enzyme catalyses isopentenyl diphosphate + 2 oxidized [2Fe-2S]-[ferredoxin] + H2O = (2E)-4-hydroxy-3-methylbut-2-enyl diphosphate + 2 reduced [2Fe-2S]-[ferredoxin] + 2 H(+). It carries out the reaction dimethylallyl diphosphate + 2 oxidized [2Fe-2S]-[ferredoxin] + H2O = (2E)-4-hydroxy-3-methylbut-2-enyl diphosphate + 2 reduced [2Fe-2S]-[ferredoxin] + 2 H(+). The protein operates within isoprenoid biosynthesis; dimethylallyl diphosphate biosynthesis; dimethylallyl diphosphate from (2E)-4-hydroxy-3-methylbutenyl diphosphate: step 1/1. It participates in isoprenoid biosynthesis; isopentenyl diphosphate biosynthesis via DXP pathway; isopentenyl diphosphate from 1-deoxy-D-xylulose 5-phosphate: step 6/6. In terms of biological role, catalyzes the conversion of 1-hydroxy-2-methyl-2-(E)-butenyl 4-diphosphate (HMBPP) into a mixture of isopentenyl diphosphate (IPP) and dimethylallyl diphosphate (DMAPP). Acts in the terminal step of the DOXP/MEP pathway for isoprenoid precursor biosynthesis. The sequence is that of 4-hydroxy-3-methylbut-2-enyl diphosphate reductase from Gluconobacter oxydans (strain 621H) (Gluconobacter suboxydans).